The following is a 153-amino-acid chain: Protein Smg homolog (153 aa).

The protein belongs to the Smg family.

The chain is Protein Smg homolog from Neisseria meningitidis serogroup B (strain ATCC BAA-335 / MC58).